The following is a 726-amino-acid chain: MDAANLVMKSSLFSKSPCPLFSSKLIPRAPPSVFTLPSTFRPLVKCIQASFPPNPDSKKPSNNSTFTCSAVTSFPSQQSQPHAPSDAKLQLLISEFQSLVEPMDRVKRLLHYSTLLPPMDASFKTPENRVPGCTTQVWLNVSFDEAENRMKFLADSDSEITKGFCACLVSLLDGATPDEVLALKTEDLNALNVAGLNGKGSASRANTWHNVLVSMQKRTRALVAEREGRPRGELFPSLVITADGIQPQGSYAEAQARFLFPDESRVQKLASLLKEKKIGVVAHFYMDPEVQGVLTAAQKLWPHIHISDSLVMADKAVSMAKAGCEYISVLGVDFMSENVRAILDLAGFPEVGVYRMSDERIGCSLADAAASPAYLDYLKTASTSSPSLHVVYINTSLETKAYSHELVPTITCTSSNVVQTILQAFAEVPDLEVLYGPDTYMGSNIAELFTQMSTMTDEEISAIHPLHNRISIKSLLPRLHYFQDGTCIVHHLFGHEVVEKINEMYGDAFLTAHFEVPGEMFSLAMEAKKRGMGVVGSTSNILDFIKERVEESLNRNVDEHLQFVLGTESGMITAIVAAVGKLLGSADSSSGGAKVSVEIVFPVSSESVTRTSTGSPLDQNKVNIIPGVASGEGCSLHGGCASCPYMKMNSLSSLLKVCQSLPHGKAELSAYEAGRFSLRTPKGKQIADVGCEPVLHMRHFQATKRLPEQLINQILQPRDNGRSSSA.

The N-terminal 67 residues, 1-67 (MDAANLVMKS…KKPSNNSTFT (67 aa)), are a transit peptide targeting the chloroplast. Cys133 functions as the Cysteine persulfide intermediate in the catalytic mechanism. His283 and Ser309 together coordinate iminosuccinate. Cys363 contacts [4Fe-4S] cluster. Iminosuccinate-binding positions include 392–394 (YIN) and Ser414. Cys487 contacts [4Fe-4S] cluster. Iminosuccinate-binding positions include 513–515 (HFE) and Thr538. Cys643 lines the [4Fe-4S] cluster pocket.

This sequence belongs to the quinolinate synthase family. Type 1 subfamily. Homodimer. The cofactor is [4Fe-4S] cluster.

The protein resides in the plastid. It localises to the chloroplast. It carries out the reaction iminosuccinate + dihydroxyacetone phosphate = quinolinate + phosphate + 2 H2O + H(+). The protein operates within alkaloid biosynthesis; nicotine biosynthesis. It functions in the pathway cofactor biosynthesis; NAD(+) biosynthesis; quinolinate from iminoaspartate: step 1/1. Its function is as follows. Involved in the biosynthesis of pyridine alkaloid natural products, leading mainly to the production of anabasine, anatabine, nicotine and nornicotine, effective deterrents against herbivores with antiparasitic and pesticide properties (neurotoxins); nornicotine serves as the precursor in the synthesis of the carcinogen compound N'-nitrosonornicotine (NNN). Catalyzes the condensation of iminoaspartate with dihydroxyacetone phosphate to form quinolinate. The sequence is that of Quinolinate synthase, chloroplastic from Nicotiana tabacum (Common tobacco).